The primary structure comprises 286 residues: 4-diphosphocytidyl-2-C-methyl-D-erythritol kinase (286 aa).

Lys11 is a catalytic residue. 94–104 (PMGGGIGGGSS) is an ATP binding site. Asp136 is an active-site residue.

This sequence belongs to the GHMP kinase family. IspE subfamily.

The enzyme catalyses 4-CDP-2-C-methyl-D-erythritol + ATP = 4-CDP-2-C-methyl-D-erythritol 2-phosphate + ADP + H(+). It participates in isoprenoid biosynthesis; isopentenyl diphosphate biosynthesis via DXP pathway; isopentenyl diphosphate from 1-deoxy-D-xylulose 5-phosphate: step 3/6. Its function is as follows. Catalyzes the phosphorylation of the position 2 hydroxy group of 4-diphosphocytidyl-2C-methyl-D-erythritol. This Pseudomonas putida (strain W619) protein is 4-diphosphocytidyl-2-C-methyl-D-erythritol kinase.